We begin with the raw amino-acid sequence, 311 residues long: ATP synthase subunit a (311 aa).

6 helical membrane-spanning segments follow: residues 62–82 (AVHVDTLGWGIFLALVVGFFM), 123–143 (VAPMAITVFSWVFMMNLMDLI), 179–199 (VTVFILMLFFSVQQKGLWGFI), 213–233 (FWYFNLILIPFNFILETVALI), 253–273 (IFILIATLFSVGLLFGFLGGI), and 276–296 (FGWAVLHILVILIQAFVFMVL).

This sequence belongs to the ATPase A chain family. In terms of assembly, F-type ATPases have 2 components, CF(1) - the catalytic core - and CF(0) - the membrane proton channel. CF(1) has five subunits: alpha(3), beta(3), gamma(1), delta(1), epsilon(1). CF(0) has three main subunits: a(1), b(2) and c(9-12). The alpha and beta chains form an alternating ring which encloses part of the gamma chain. CF(1) is attached to CF(0) by a central stalk formed by the gamma and epsilon chains, while a peripheral stalk is formed by the delta and b chains.

It is found in the cell inner membrane. In terms of biological role, key component of the proton channel; it plays a direct role in the translocation of protons across the membrane. In Teredinibacter turnerae (strain ATCC 39867 / T7901), this protein is ATP synthase subunit a.